Consider the following 213-residue polypeptide: Octanoyltransferase (213 aa).

The BPL/LPL catalytic domain occupies Asp32–Pro207. Residues Arg71–His78, Ser138–Gly140, and Gly151–Ala153 each bind substrate. Cys169 serves as the catalytic Acyl-thioester intermediate.

Belongs to the LipB family.

It is found in the cytoplasm. It catalyses the reaction octanoyl-[ACP] + L-lysyl-[protein] = N(6)-octanoyl-L-lysyl-[protein] + holo-[ACP] + H(+). It functions in the pathway protein modification; protein lipoylation via endogenous pathway; protein N(6)-(lipoyl)lysine from octanoyl-[acyl-carrier-protein]: step 1/2. Functionally, catalyzes the transfer of endogenously produced octanoic acid from octanoyl-acyl-carrier-protein onto the lipoyl domains of lipoate-dependent enzymes. Lipoyl-ACP can also act as a substrate although octanoyl-ACP is likely to be the physiological substrate. This Enterobacter sp. (strain 638) protein is Octanoyltransferase.